The primary structure comprises 203 residues: Urease accessory protein UreG (203 aa).

13 to 20 (GPVGSGKT) lines the GTP pocket.

The protein belongs to the SIMIBI class G3E GTPase family. UreG subfamily. Homodimer. UreD, UreF and UreG form a complex that acts as a GTP-hydrolysis-dependent molecular chaperone, activating the urease apoprotein by helping to assemble the nickel containing metallocenter of UreC. The UreE protein probably delivers the nickel.

It is found in the cytoplasm. In terms of biological role, facilitates the functional incorporation of the urease nickel metallocenter. This process requires GTP hydrolysis, probably effectuated by UreG. This Methylobacillus flagellatus (strain ATCC 51484 / DSM 6875 / VKM B-1610 / KT) protein is Urease accessory protein UreG.